Consider the following 188-residue polypeptide: MEQRLAEFREARKRASLVAQPSTSSQSVQTSGAKAEPAAATPKTATGWLTRFLKRKANPAIAQAQPNQPQEAGQQLPESTAVPLPSSCRQSFLTNITFLKVLLWLVLLGLFVELEFGLAYFVLSMFYWMYVGTRGPEEKKEGEKSAYSVFNPGCEAIQGTLTAEQLEQELQLRPPQGSRTSPSCSSYP.

Residues 1 to 10 (MEQRLAEFRE) are compositionally biased toward basic and acidic residues. Disordered regions lie at residues 1-43 (MEQR…ATPK) and 60-80 (AIAQAQPNQPQEAGQQLPEST). At 1–100 (MEQRLAEFRE…SFLTNITFLK (100 aa)) the chain is on the cytoplasmic side. 2 stretches are compositionally biased toward low complexity: residues 22-43 (STSSQSVQTSGAKAEPAAATPK) and 60-75 (AIAQAQPNQPQEAGQQ). The interval 86-100 (SSCRQSFLTNITFLK) is middle helical (MH). Residues 101 to 121 (VLLWLVLLGLFVELEFGLAYF) constitute an intramembrane region (helical). Topologically, residues 122–188 (VLSMFYWMYV…RTSPSCSSYP (67 aa)) are cytoplasmic.

It belongs to the SAYSD1 family. Associates (via N-terminus) with ribosomes. As to expression, enriched in testis; predominantly expressed in round and elongating spermatids.

It localises to the endoplasmic reticulum membrane. Its subcellular location is the cytoplasmic vesicle membrane. Functionally, ufmylation 'reader' component of a translocation-associated quality control pathway, a mechanism that takes place when a ribosome has stalled during translation, and which is required to degrade clogged substrates. Specifically recognizes and binds ufmylated ribosomes when a ribosome has stalled, promoting the transport of stalled nascent chain via the TRAPP complex to lysosomes for degradation. The chain is SAYSvFN domain-containing protein 1 from Mus musculus (Mouse).